We begin with the raw amino-acid sequence, 205 residues long: Nitrophorin-7 (205 aa).

An N-terminal signal peptide occupies residues 1–20 (MELYTALLAVTILSPSSIVG). Cystine bridges form between Cys25–Cys144 and Cys62–Cys193. Residue Asp52 participates in histamine binding. Heme is bound by residues His80 and Asn91. Asp154 is a binding site for histamine.

The protein belongs to the calycin superfamily. Nitrophorin family. Forms oligomers (at pH 5.5). Requires heme b as cofactor. Expressed in the endothelial cells of the salivary glands.

It is found in the secreted. The catalysed reaction is 3 nitrite + 2 H(+) = 2 nitric oxide + nitrate + H2O. Functionally, converts nitrite as the sole substrate to form nitric oxide gas (NO). NO(2-) serves both as an electron donor and as an electron acceptor. Binds to negatively charged cell surfaces of activated platelets; binds to L-a-phosphatidyl-L-serine (PS)-bearing phospholipid membranes. Once bound on an activated platelet, NP7 releases its stored nitric oxide gas (NO) into the victim's tissues while feeding, resulting in vasodilation and inhibition of platelet aggregation. Also acts as an anticoagulant by blocking coagulation-factor binding sites. Has antihistamine activity; binds histamine with high affinity. This chain is Nitrophorin-7, found in Rhodnius prolixus (Triatomid bug).